The following is a 410-amino-acid chain: Angiopoietin-related protein 4 (410 aa).

The signal sequence occupies residues 1-23; it reads MRCAPTAGAALVLCAATAGLLSA. The tract at residues 79–101 is disordered; that stretch reads ACQGPKGKDAPFKDSEDRVPEGQ. The span at 84-98 shows a compositional bias: basic and acidic residues; it reads KGKDAPFKDSEDRVP. Residues 104 to 152 are a coiled coil; that stretch reads ETLQSLQTQLKAQNSKIQQLFQKVAQQQRYLSKQNLRIQNLQSQIDLLA. A glycan (N-linked (GlcNAc...) asparagine) is linked at asparagine 181. A Fibrinogen C-terminal domain is found at 183 to 405; it reads THLHRPPRDC…ATTLLIQPME (223 aa). The cysteines at positions 192 and 220 are disulfide-linked. 2 N-linked (GlcNAc...) asparagine glycosylation sites follow: asparagine 236 and asparagine 242. A disulfide bond links cysteine 345 and cysteine 358.

As to quaternary structure, homooligomer; disulfide-linked via Cys residues in the N-terminal part of the protein. The homooligomer undergoes proteolytic processing to release the ANGPTL4 C-terminal chain, which circulates as a monomer. The homooligomer unprocessed form is able to interact with the extracellular matrix. Post-translationally, N-glycosylated. In terms of processing, forms disulfide-linked dimers and tetramers. Cleaved into a smaller N-terminal chain and a larger chain that contains the fibrinogen C-terminal domain; both cleaved and uncleaved forms are detected in the extracellular space. The cleaved form is not present within the cell. As to expression, detected in liver and kidney. Predominantly expressed in adipose tissue and is strongly up-regulated by fasting in white adipose tissue and liver. More abundant in areas of lower flow stress in the inner curvature compared to the outer curvature regions of the aorta (at protein level).

It is found in the secreted. Its subcellular location is the extracellular space. The protein resides in the extracellular matrix. Its function is as follows. Mediates inactivation of the lipoprotein lipase LPL, and thereby plays a role in the regulation of triglyceride clearance from the blood serum and in lipid metabolism. May also play a role in regulating glucose homeostasis and insulin sensitivity. Inhibits proliferation, migration, and tubule formation of endothelial cells and reduces vascular leakage. Upon heterologous expression, inhibits the adhesion of endothelial cell to the extracellular matrix (ECM), and inhibits the reorganization of the actin cytoskeleton, formation of actin stress fibers and focal adhesions in endothelial cells that have adhered to ANGPTL4-containing ECM (in vitro). Depending on context, may modulate tumor-related angiogenesis. In terms of biological role, mediates inactivation of the lipoprotein lipase LPL, and thereby plays an important role in the regulation of triglyceride clearance from the blood serum and in lipid metabolism. Has higher activity in LPL inactivation than the uncleaved protein. The polypeptide is Angiopoietin-related protein 4 (Angptl4) (Mus musculus (Mouse)).